A 640-amino-acid polypeptide reads, in one-letter code: F-box only protein 43 (640 aa).

Position 176 is a phosphothreonine (Thr-176). Ser-275 carries the phosphoserine modification. Residues 328–354 (LQEQGQSEDEMQTVHPNSDSGVLESLQ) form a disordered region. One can recognise an F-box domain in the interval 423–480 (MGIEQLDILTELQYRNLKHILAMVLESLTSESLYSAWNVSRNWREIVAQDKKANRRRK). The ZBR-type zinc finger occupies 568 to 616 (ALKPCPRCQSPAKYQPHKKRGLCSRLACGFDFCVLCLCAYHGSEDCRRG). 8 residues coordinate Zn(2+): Cys-572, Cys-575, Cys-590, Cys-595, Cys-600, Cys-603, His-608, and Cys-613. Residues 615–640 (RGSAKARGSKDVLPGSAQSKRNLKRL) form a disordered region.

Part of a SCF (SKP1-cullin-F-box) protein ligase complex. Interaction with SKP1 does not occur. Interacts with ANAPC2; the interaction is direct, ANAPC4, CDC16, CDC23; the interaction is direct, ANAPC10; the interaction is direct and CDC26, during spermatogenesis. Interacts with CDC20. Post-translationally, phosphorylated on Thr-176 and Ser-275 in response to calcium, which is a prerequisite for ubiquitination and proteasomal degradation. Ubiquitinated in response to calcium, which promotes proteasomal degradation. In terms of tissue distribution, present in testis and ovary (at protein level). Expression is high in immature oocytes, and diminishes after oocyte activation. Expressed post-meiotically in spermatids and sperm.

It participates in protein modification; protein ubiquitination. Its function is as follows. Required to establish and maintain the arrest of oocytes at the second meiotic metaphase until fertilization. Acts by inhibiting the anaphase-promoting complex/cyclosome (APC/C) ubiquitin ligase. Probably recognizes and binds to some phosphorylated proteins and promotes their ubiquitination and degradation. Plays a vital role in modulating the ubiquitilation of CCNB1 and CDK1 during gametogenesis. The protein is F-box only protein 43 (Fbxo43) of Mus musculus (Mouse).